The following is a 247-amino-acid chain: Carboxy-S-adenosyl-L-methionine synthase (247 aa).

S-adenosyl-L-methionine-binding positions include Tyr40, 65–67 (GAS), 90–91 (DN), 122–123 (DI), Asn137, and Arg204.

It belongs to the class I-like SAM-binding methyltransferase superfamily. Cx-SAM synthase family. Homodimer.

The enzyme catalyses prephenate + S-adenosyl-L-methionine = carboxy-S-adenosyl-L-methionine + 3-phenylpyruvate + H2O. Functionally, catalyzes the conversion of S-adenosyl-L-methionine (SAM) to carboxy-S-adenosyl-L-methionine (Cx-SAM). This is Carboxy-S-adenosyl-L-methionine synthase from Pseudomonas putida (strain ATCC 47054 / DSM 6125 / CFBP 8728 / NCIMB 11950 / KT2440).